The primary structure comprises 311 residues: L-lactate dehydrogenase 2 (311 aa).

Positions 14, 35, and 40 each coordinate NAD(+). Residues Arg-90 and 122–125 (NPCD) each bind substrate. NAD(+) contacts are provided by residues 120 to 122 (ATN) and Thr-145. 150 to 153 (DTTR) serves as a coordination point for substrate. Residue His-177 is the Proton acceptor of the active site. Thr-230 is a binding site for substrate.

Belongs to the LDH/MDH superfamily. LDH family. As to quaternary structure, homotetramer.

Its subcellular location is the cytoplasm. It carries out the reaction (S)-lactate + NAD(+) = pyruvate + NADH + H(+). It participates in fermentation; pyruvate fermentation to lactate; (S)-lactate from pyruvate: step 1/1. In terms of biological role, catalyzes the conversion of lactate to pyruvate. This Listeria monocytogenes serovar 1/2a (strain ATCC BAA-679 / EGD-e) protein is L-lactate dehydrogenase 2.